The sequence spans 332 residues: Lipoyl synthase (332 aa).

Residues C74, C79, C85, C100, C104, C107, and S314 each coordinate [4Fe-4S] cluster. One can recognise a Radical SAM core domain in the interval 85-303 (CFGKGTATFM…EQEAYRMGFS (219 aa)).

Belongs to the radical SAM superfamily. Lipoyl synthase family. [4Fe-4S] cluster serves as cofactor.

Its subcellular location is the cytoplasm. The enzyme catalyses [[Fe-S] cluster scaffold protein carrying a second [4Fe-4S](2+) cluster] + N(6)-octanoyl-L-lysyl-[protein] + 2 oxidized [2Fe-2S]-[ferredoxin] + 2 S-adenosyl-L-methionine + 4 H(+) = [[Fe-S] cluster scaffold protein] + N(6)-[(R)-dihydrolipoyl]-L-lysyl-[protein] + 4 Fe(3+) + 2 hydrogen sulfide + 2 5'-deoxyadenosine + 2 L-methionine + 2 reduced [2Fe-2S]-[ferredoxin]. Its pathway is protein modification; protein lipoylation via endogenous pathway; protein N(6)-(lipoyl)lysine from octanoyl-[acyl-carrier-protein]: step 2/2. Functionally, catalyzes the radical-mediated insertion of two sulfur atoms into the C-6 and C-8 positions of the octanoyl moiety bound to the lipoyl domains of lipoate-dependent enzymes, thereby converting the octanoylated domains into lipoylated derivatives. In Verminephrobacter eiseniae (strain EF01-2), this protein is Lipoyl synthase.